The sequence spans 1333 residues: ABC transporter ATP-binding protein/permease PDR18 (1333 aa).

A helical membrane pass occupies residues 13–33 (FLEGQTFGDILCLPWTIIKGI). The region spanning 30–281 (IKGIRERKNR…FENMGYLCPP (252 aa)) is the ABC transporter 1 domain. Residues Asn-48, Asn-144, Asn-205, and Asn-350 are each glycosylated (N-linked (GlcNAc...) asparagine). 6 helical membrane-spanning segments follow: residues 392–412 (YTVINTCAAIAQAFITGSLFY), 425–445 (SGVLFFSLLYYSLMGLANISF), 474–494 (FPFRMIGLTFFIIILYFLAGL), 499–519 (GAFFTMYLLLTMCSEAITSLF), 534–554 (SIAGVVMLSIAMYSTYMIQLP), and 642–662 (FGIMWCFLIGYIVLRAVFTEY). Residues Asn-697 and Asn-733 are each glycosylated (N-linked (GlcNAc...) asparagine). The 243-residue stretch at 729-971 (FIWKNVSFTI…VIKYFEKNGA (243 aa)) folds into the ABC transporter 2 domain. 765-772 (GESGAGKT) is a binding site for ATP. Residue Asn-958 is glycosylated (N-linked (GlcNAc...) asparagine). Transmembrane regions (helical) follow at residues 1071-1091 (LLMISGLFIGFTFFHVGVNAI), 1092-1112 (GLQNSLFACFMAIVISAPATN), 1150-1170 (PYHLLFSTIFFVSSYFPLGVF), 1178-1198 (VFYLNYAILFQLYYIGLALMI), 1210-1230 (VIVGFILSFLLSFCGAVQPAS), and 1235-1255 (FWTFMWKLSPYTYFLQNLVGL). Asn-1320 carries an N-linked (GlcNAc...) asparagine glycan.

It belongs to the ABC transporter superfamily. ABCG family. PDR (TC 3.A.1.205) subfamily.

Its subcellular location is the membrane. This Saccharomyces cerevisiae (strain ATCC 204508 / S288c) (Baker's yeast) protein is ABC transporter ATP-binding protein/permease PDR18 (PDR18).